Reading from the N-terminus, the 279-residue chain is NADPH-dependent 7-cyano-7-deazaguanine reductase (279 aa).

Substrate is bound at residue 86–88 (IES). 88-89 (SK) serves as a coordination point for NADPH. C187 functions as the Thioimide intermediate in the catalytic mechanism. D194 (proton donor) is an active-site residue. 226–227 (HE) is a substrate binding site. 255–256 (RG) serves as a coordination point for NADPH.

Belongs to the GTP cyclohydrolase I family. QueF type 2 subfamily. In terms of assembly, homodimer.

The protein resides in the cytoplasm. The enzyme catalyses 7-aminomethyl-7-carbaguanine + 2 NADP(+) = 7-cyano-7-deazaguanine + 2 NADPH + 3 H(+). It participates in tRNA modification; tRNA-queuosine biosynthesis. Catalyzes the NADPH-dependent reduction of 7-cyano-7-deazaguanine (preQ0) to 7-aminomethyl-7-deazaguanine (preQ1). The chain is NADPH-dependent 7-cyano-7-deazaguanine reductase from Haemophilus ducreyi (strain 35000HP / ATCC 700724).